A 161-amino-acid chain; its full sequence is D-amino-acid N-acetyltransferase HPA3 (161 aa).

Ser-2 bears the N-acetylserine mark. Residues 14–161 (IVVKAIEPKD…DKVLYKRNGY (148 aa)) form the N-acetyltransferase domain. 98 to 111 (LYVTERARVKGVGR) is an acetyl-CoA binding site.

The protein belongs to the acetyltransferase family. GNAT subfamily. In terms of processing, autoacetylates in an intermolecular reaction.

It is found in the cytoplasm. It localises to the nucleus. It carries out the reaction a D-alpha-amino acid + acetyl-CoA = an N-acetyl-D-amino acid + CoA + H(+). N-acetyltransferase that acts on a wide range of D-amino acids. Catalyzes the N-acetylation through an ordered bi-bi mechanism, in which acetyl-CoA is the first substrate to be bound and CoA is the last product to be liberated. D-amino acids are toxic for the cell and their N-acetylation, preceding removal from cells, plays an important role in detoxification of D-amino acids. In vitro, capable of acetylating histone H4 at 'Lys-8' and polyamines like putrescine, spermidine and spermine. This is D-amino-acid N-acetyltransferase HPA3 from Saccharomyces cerevisiae (strain ATCC 204508 / S288c) (Baker's yeast).